The following is a 200-amino-acid chain: 3-isopropylmalate dehydratase small subunit (200 aa).

This sequence belongs to the LeuD family. LeuD type 1 subfamily. As to quaternary structure, heterodimer of LeuC and LeuD.

It catalyses the reaction (2R,3S)-3-isopropylmalate = (2S)-2-isopropylmalate. It participates in amino-acid biosynthesis; L-leucine biosynthesis; L-leucine from 3-methyl-2-oxobutanoate: step 2/4. In terms of biological role, catalyzes the isomerization between 2-isopropylmalate and 3-isopropylmalate, via the formation of 2-isopropylmaleate. This chain is 3-isopropylmalate dehydratase small subunit, found in Yersinia pseudotuberculosis serotype O:1b (strain IP 31758).